The following is a 66-amino-acid chain: Alpha-conotoxin GID (66 aa).

The first 21 residues, 1-21 (MGMRMMFTVFLLVVLAATIVS), serve as a signal peptide directing secretion. The propeptide occupies 22 to 44 (FTSDRASDGRNVAAKAFHRIGRT). The interval 45 to 48 (IRDE) is N-terminal tail important for activity on alpha-3-beta-2/CHRNA3-CHRNB2 and alpha-4-beta-2/CHRNA4-CHRNB2 nAChR. Glutamate 48 is subject to 4-carboxyglutamate. Intrachain disulfides connect cysteine 49-cysteine 55 and cysteine 50-cysteine 63. The interval 51–53 (SNP) is ser-Xaa-Pro motif, crucial for potent interaction with nAChR. At proline 60 the chain carries 4-hydroxyproline.

Belongs to the conotoxin A superfamily. Gamma-carboxyglutamation of Glu-48 seems to be not important for nAChR inhibition, since synthetic peptides without this modification do not show change in inhibition of alpha-7/CHRNA7 and alpha-3-beta-2/CHRNA3-CHRNB2 nAChR and show a 2.3-fold increase in inhibition of alpha-4-beta-2/CHRNA4-CHRNB2 nAChR. In terms of processing, hydroxylation of Pro-60 seems to be important for nAChR inhibition, since synthetic peptides without this modification show a small decrease in inhibition of alpha-7/CHRNA7 and alpha-3-beta-2/CHRNA3-CHRNB2 nAChR and a very important decrease in inhibition of alpha-4-beta-2/CHRNA4-CHRNB2 nAChR. Post-translationally, an amidation of Cys-63 increases potency against alpha-7/CHRNA7 (2.6-fold) and alpha-3-beta-2/CHRNA3-CHRNB2 (2-fold) nAChR. On the other hand, the peptide has no more activity on alpha-4-beta-2/CHRNA4-CHRNB2 nAChR with an amidated Cys-63. In terms of tissue distribution, expressed by the venom duct.

The protein localises to the secreted. Functionally, alpha-conotoxins act on postsynaptic membranes, they bind to the nicotinic acetylcholine receptors (nAChR) and thus inhibit them. This toxin reversibly blocks alpha-3-beta-2/CHRNA3-CHRNB2 (IC(50)=3.1-5.1 nM), alpha-7/CHRNA7 (IC(50)=4.5-5.1 nM), and alpha-4-beta-2/CHRNA4-CHRNB2 (IC(50)=128.6-390 nM) nAChRs. The protein is Alpha-conotoxin GID of Conus geographus (Geography cone).